Here is a 194-residue protein sequence, read N- to C-terminus: Putative lipoprotein LppK (194 aa).

Positions 1 to 26 are cleaved as a signal peptide; sequence MSRWTHRTFFIALSAIVTTAGFGSSG. C27 carries the N-palmitoyl cysteine lipid modification. C27 carries the S-diacylglycerol cysteine lipid modification. Positions 174–194 are disordered; sequence GNSSGLTNPAPIKAPTPTPSH. Pro residues predominate over residues 185-194; it reads IKAPTPTPSH.

It belongs to the MTB12 family.

The protein localises to the cell membrane. The protein is Putative lipoprotein LppK (lppK) of Mycobacterium leprae (strain TN).